A 204-amino-acid chain; its full sequence is Redox-sensing transcriptional repressor Rex 2 (204 aa).

A DNA-binding region (H-T-H motif) is located at residues 17–53; it reads MYRKVLEATKKPYISSDEIARFLEINPDLVRKDFSYL.

This sequence belongs to the transcriptional regulatory Rex family. Homodimer.

It is found in the cytoplasm. Modulates transcription in response to changes in cellular NADH/NAD(+) redox state. This Thermotoga maritima (strain ATCC 43589 / DSM 3109 / JCM 10099 / NBRC 100826 / MSB8) protein is Redox-sensing transcriptional repressor Rex 2 (rex2).